Reading from the N-terminus, the 449-residue chain is Putative gustatory receptor 77a (449 aa).

The Cytoplasmic portion of the chain corresponds to 1–27 (MPLPLGDPLALAVSPQLGYIRITAMPR). A helical transmembrane segment spans residues 28-50 (WLQLPGMSALGILYSLTRVFGLM). Topologically, residues 51 to 70 (ATANWSPRGIKRVRQSLYLR) are extracellular. A helical transmembrane segment spans residues 71 to 93 (IHGCVMLIFVGCFSPFAFWCIFQ). The Cytoplasmic portion of the chain corresponds to 94–102 (RMAFLRQNR). A helical membrane pass occupies residues 103–125 (ILLMIGFNRYVLLLVCAFMTLWI). Over 126 to 205 (HCFKQAEIIG…VRRNFMYACS (80 aa)) the chain is Extracellular. Residues 206–228 (LVFVSVCQAILQLSLGMYTMAIL) form a helical membrane-spanning segment. The Cytoplasmic portion of the chain corresponds to 229 to 298 (FLGHLVRHSN…LLKLHRSICS (70 aa)). The chain crosses the membrane as a helical span at residues 299 to 321 (LCAVQAVCFLGFVPLECTIHLFF). The Extracellular portion of the chain corresponds to 322-340 (TYFMKYSKFILRKYGRSFP). The helical transmembrane segment at 341–363 (LNYFAIAFLVGLFTNLLLVILPT) threads the bilayer. At 364-420 (YYSERRFNCTREIIKGGGLAFPSRITVKQLRHTMHFYGLYLKNVEHVFAVSACGLFK) the chain is on the cytoplasmic side. The helical transmembrane segment at 421-443 (LNNAILFCIVGAILEYLMILIQF) threads the bilayer. At 444-449 (DKVLNK) the chain is on the extracellular side.

It belongs to the insect chemoreceptor superfamily. Gustatory receptor (GR) family. Gr77a subfamily. As to expression, in larvae, is expressed in dorsal pharyngeal sense organ.

It is found in the cell membrane. Its function is as follows. Probable gustatory receptor which mediates acceptance or avoidance behavior, depending on its substrates. This is Putative gustatory receptor 77a (Gr77a) from Drosophila melanogaster (Fruit fly).